Consider the following 396-residue polypeptide: Acetate kinase (396 aa).

Position 7 (Asn-7) interacts with Mg(2+). Lys-14 contacts ATP. Position 88 (Arg-88) interacts with substrate. Residue Asp-145 is the Proton donor/acceptor of the active site. Residues 205 to 209 (HLGNG), 279 to 281 (DFR), and 327 to 331 (GIGEN) each bind ATP. Glu-381 lines the Mg(2+) pocket.

It belongs to the acetokinase family. Homodimer. The cofactor is Mg(2+). Mn(2+) is required as a cofactor.

Its subcellular location is the cytoplasm. The catalysed reaction is acetate + ATP = acetyl phosphate + ADP. It participates in metabolic intermediate biosynthesis; acetyl-CoA biosynthesis; acetyl-CoA from acetate: step 1/2. Catalyzes the formation of acetyl phosphate from acetate and ATP. Can also catalyze the reverse reaction. The sequence is that of Acetate kinase from Campylobacter jejuni (strain RM1221).